Here is a 108-residue protein sequence, read N- to C-terminus: Zinc metalloproteinase/disintegrin (108 aa).

In terms of domain architecture, Peptidase M12B spans 1-19 (NEYQTYLTDRNPQCILNEP). The propeptide occupies 20–35 (LRTDTVSTPVSGNELL). The 82-residue stretch at 27–108 (TPVSGNELLE…ADCPRNGFYG (82 aa)) folds into the Disintegrin domain. Disulfide bonds link cysteine 41-cysteine 56, cysteine 43-cysteine 51, cysteine 50-cysteine 73, cysteine 64-cysteine 70, cysteine 69-cysteine 94, and cysteine 82-cysteine 101. The Cell attachment site; atypical (KGD) signature appears at 86–88 (KGD).

It belongs to the venom metalloproteinase (M12B) family. P-II subfamily. P-IIa sub-subfamily. As to quaternary structure, monomeric (disintegrin). Requires Zn(2+) as cofactor. As to expression, expressed by the venom gland.

Its subcellular location is the secreted. Impairs hemostasis in the envenomed animal. In terms of biological role, inhibits platelet aggregation induced by ADP, thrombin, platelet-activating factor and collagen. Acts by inhibiting fibrinogen interaction with platelet receptors GPIIb/GPIIIa (ITGA2B/ITGB3). The sequence is that of Zinc metalloproteinase/disintegrin from Gloydius brevicauda (Korean slamosa snake).